A 1072-amino-acid polypeptide reads, in one-letter code: RIMS-binding protein 2 (1072 aa).

One can recognise an SH3 1 domain in the interval 181–248 (GKVHLCVARY…PSNFVDFIQD (68 aa)). Fibronectin type-III domains follow at residues 311-404 (VPYP…GKDV), 407-489 (APSQ…KKEA), and 503-604 (PPQD…VPPA). 2 disordered regions span residues 597–681 (PDLL…APVS) and 713–800 (SAGQ…TSHN). The segment covering 599–615 (LLVPPAPHPRTAPPPKP) has biased composition (pro residues). Residues 620 to 635 (MDTKDQHLGPHVKVDE) are compositionally biased toward basic and acidic residues. The segment covering 660 to 670 (GPGRRSPSPSR) has biased composition (low complexity). 2 positions are modified to phosphoserine: Ser720 and Ser728. 2 stretches are compositionally biased toward basic and acidic residues: residues 730–743 (EVKRRGTSVDDFLK) and 754–765 (CHGDEYHTESSR). Positions 771-781 (DIMEEDEEELY) are enriched in acidic residues. A phosphoserine mark is found at Ser852 and Ser859. A Phosphothreonine modification is found at Thr861. SH3 domains follow at residues 868–936 (LPAR…EIHA) and 972–1039 (VPTR…EVPD). Residues 1044–1072 (HLSDAPPHYSHDPPMRSKAKRKKSVHFTP) form a disordered region. Residues 1060-1072 (SKAKRKKSVHFTP) show a composition bias toward basic residues.

It belongs to the RIMBP family. Interacts with RIMS1, RIMS2, CACNA1D and CACNA1B, and potentially with other Ca(2+) channel alpha-1 isoforms.

The protein localises to the cell membrane. Its subcellular location is the synapse. Its function is as follows. Plays a role in the synaptic transmission as bifunctional linker that interacts simultaneously with RIMS1, RIMS2, CACNA1D and CACNA1B. This is RIMS-binding protein 2 (Rimbp2) from Mus musculus (Mouse).